The chain runs to 397 residues: UDP-GlcNAc:betaGal beta-1,3-N-acetylglucosaminyltransferase 8 (397 aa).

At 1–6 the chain is on the cytoplasmic side; the sequence is MRCPKC. The helical; Signal-anchor for type II membrane protein transmembrane segment at 7–23 threads the bilayer; it reads LLCLSALLTLLGLKVYI. The Lumenal portion of the chain corresponds to 24–397; that stretch reads EWTSESRLSK…KQLQDPRLQC (374 aa). Residues 33 to 58 form a disordered region; it reads KAYPSPRGTPPSPTPANPEPTLPANL. Residues 39–53 are compositionally biased toward pro residues; sequence RGTPPSPTPANPEPT. Asn-57 carries an N-linked (GlcNAc...) asparagine glycan.

This sequence belongs to the glycosyltransferase 31 family. Interacts with B3GNT2; this interaction greatly increases B3GNT2 catalytic activity, independently of B3GNT8 enzymatic activity. Highly expressed in small intestine, pancreas, spleen, bone marrow, lung, throat, and ileum, and weakly in fetal brain, cerebellum, heart, liver, tongue, breast, uteri, and testis. Not detected in colon. Differentially expressed in human tumor cell lines.

It localises to the golgi apparatus membrane. Its pathway is protein modification; protein glycosylation. Beta-1,3-N-acetylglucosaminyltransferase that plays a role in the elongation of specific branch structures of multiantennary N-glycans. Has strong activity towards tetraantennary N-glycans and 2,6 triantennary glycans. This Homo sapiens (Human) protein is UDP-GlcNAc:betaGal beta-1,3-N-acetylglucosaminyltransferase 8.